The following is a 446-amino-acid chain: Exodeoxyribonuclease 7 large subunit (446 aa).

The protein belongs to the XseA family. Heterooligomer composed of large and small subunits.

The protein resides in the cytoplasm. The catalysed reaction is Exonucleolytic cleavage in either 5'- to 3'- or 3'- to 5'-direction to yield nucleoside 5'-phosphates.. In terms of biological role, bidirectionally degrades single-stranded DNA into large acid-insoluble oligonucleotides, which are then degraded further into small acid-soluble oligonucleotides. The protein is Exodeoxyribonuclease 7 large subunit of Staphylococcus carnosus (strain TM300).